The sequence spans 342 residues: Cell division protein ZipA (342 aa).

Residues 1 to 6 are Periplasmic-facing; that stretch reads MEDLQL. Residues 7 to 27 form a helical membrane-spanning segment; sequence VLFILGAIAIVAVLVHGFWSI. The Cytoplasmic segment spans residues 28–342; the sequence is RRQQPKSLKD…DYLHRIRANA (315 aa). Residues 33–57 are disordered; it reads KSLKDSPMGNFYKQQADKESPPKRV. A compositionally biased stretch (basic and acidic residues) spans 47 to 57; the sequence is QADKESPPKRV.

The protein belongs to the ZipA family. Interacts with FtsZ via their C-terminal domains.

The protein localises to the cell inner membrane. Its function is as follows. Essential cell division protein that stabilizes the FtsZ protofilaments by cross-linking them and that serves as a cytoplasmic membrane anchor for the Z ring. Also required for the recruitment to the septal ring of downstream cell division proteins. The polypeptide is Cell division protein ZipA (Shewanella sp. (strain W3-18-1)).